Here is a 503-residue protein sequence, read N- to C-terminus: ATP-dependent RNA helicase dbp3 (503 aa).

Positions 1–25 (MAKRVQHEGGDYRPQKRSKNERNGE) are enriched in basic and acidic residues. The segment at 1–35 (MAKRVQHEGGDYRPQKRSKNERNGEGSKVSPSAEA) is disordered. Positions 104–112 (SFSSPTPIQ) match the Q motif motif. A Helicase ATP-binding domain is found at 116–292 (WPLLFAGRDV…ATFMTSAVTV (177 aa)). Position 129–136 (129–136 (AETGSGKT)) interacts with ATP. A DEAD box motif is present at residues 239-242 (DEAD). One can recognise a Helicase C-terminal domain in the interval 307-472 (RIKQVVEVVK…DVPDALLKFG (166 aa)).

The protein belongs to the DEAD box helicase family. DDX5/DBP2 subfamily.

The protein resides in the nucleus. The protein localises to the nucleolus. The catalysed reaction is ATP + H2O = ADP + phosphate + H(+). Its function is as follows. ATP-dependent RNA helicase required for 60S ribosomal subunit synthesis. Involved in efficient pre-rRNA processing, predominantly at site A3, which is necessary for the normal formation of 25S and 5.8S rRNAs. The polypeptide is ATP-dependent RNA helicase dbp3 (dbp3) (Neosartorya fischeri (strain ATCC 1020 / DSM 3700 / CBS 544.65 / FGSC A1164 / JCM 1740 / NRRL 181 / WB 181) (Aspergillus fischerianus)).